The chain runs to 302 residues: Urease accessory protein UreD 2 (302 aa).

Belongs to the UreD family. As to quaternary structure, ureD, UreF and UreG form a complex that acts as a GTP-hydrolysis-dependent molecular chaperone, activating the urease apoprotein by helping to assemble the nickel containing metallocenter of UreC. The UreE protein probably delivers the nickel.

It localises to the cytoplasm. Its function is as follows. Required for maturation of urease via the functional incorporation of the urease nickel metallocenter. This is Urease accessory protein UreD 2 from Brucella canis (strain ATCC 23365 / NCTC 10854 / RM-666).